The chain runs to 505 residues: MSIKAEEISALIKQQLENYQAELNVEETGTVTYVGDGIARAHGLNNALSGELLEFSNGVFGMVQNLESNDVGIVIMGNYDGIHEGDVVKRTGRIMEVPVGDALIGRVVNPLGEPLDGKGAIQTTKTRPVENKAPGVMQRKSVEQPLQTGIKAIDALVPIGRGQRELIIGDRKTGKTTIAIDTILNQKDQDMICIYVAIGQKESTVRTQVETLRRYGAMDYTIVVSAGPSEPAPMLYLAPYAGAAMGEEFMYNGKHVLIVYDDLSKQADAYRELSLILRRPPGREAYPGDIFYTHSRLLERAAKLSDDLGGGSMTALPFVETKAGDVSAYIPTNVISITDGQVFLDGDYFNSGTRPAIDAGTSVSRVGGDAQIKAMKKVAGTLRLDLASYRELESFAQFGSDLDKATQAKLARGRRTVEVLKQPLHQPLSVENQVMILYALTHGFLDNVPVDDIQRFQDELFDYIASNNKELTDEIRETKQLPDTDKMDAAIKSFAEHFQPTKEAK.

169 to 176 (GDRKTGKT) provides a ligand contact to ATP.

The protein belongs to the ATPase alpha/beta chains family. F-type ATPases have 2 components, CF(1) - the catalytic core - and CF(0) - the membrane proton channel. CF(1) has five subunits: alpha(3), beta(3), gamma(1), delta(1), epsilon(1). CF(0) has three main subunits: a(1), b(2) and c(9-12). The alpha and beta chains form an alternating ring which encloses part of the gamma chain. CF(1) is attached to CF(0) by a central stalk formed by the gamma and epsilon chains, while a peripheral stalk is formed by the delta and b chains.

It is found in the cell membrane. It carries out the reaction ATP + H2O + 4 H(+)(in) = ADP + phosphate + 5 H(+)(out). Produces ATP from ADP in the presence of a proton gradient across the membrane. The alpha chain is a regulatory subunit. This Pediococcus pentosaceus (strain ATCC 25745 / CCUG 21536 / LMG 10740 / 183-1w) protein is ATP synthase subunit alpha.